The following is a 345-amino-acid chain: Membrane progestin receptor alpha (345 aa).

Over 1–74 (MAMAVAQKFN…FQRHNEAVNV (74 aa)) the chain is Cytoplasmic. The chain crosses the membrane as a helical span at residues 75-95 (WTHLLAALALLLRLIGLAASV). At 96-102 (DFREDPH) the chain is on the extracellular side. The helical transmembrane segment at 103–123 (ALPLFFIVLASFTYLSFSAVA) threads the bilayer. The Cytoplasmic segment spans residues 124–136 (HLLQAKSEFWHYS). Residues 137–157 (FFFLDYVGVAVYQFGSALAHF) traverse the membrane as a helical segment. Residues 158-168 (YYAIEPSWHDK) lie on the Extracellular side of the membrane. A helical membrane pass occupies residues 169-189 (VQAIFLPTAAFLAWLSCAGSC). The Cytoplasmic segment spans residues 190 to 243 (YNKYSQKPGLLGRIFQEAPSALAYVLDISPVLHRIIVSPLPAEEDPALLYHKCQ). Residues 244 to 264 (VVFFLLAAAFFSTVMPESWFP) traverse the membrane as a helical segment. Residues 265 to 268 (GSCH) lie on the Extracellular side of the membrane. A helical transmembrane segment spans residues 269 to 289 (IFGQGHQVFHVFLVLCTLAQL). Topologically, residues 290-315 (EAVTLDYQARRGIYEPLHARWPHNFS) are cytoplasmic. Residues 316-336 (GLFLLTVASSSLTALLLSQLV) traverse the membrane as a helical segment. Topologically, residues 337–345 (RRKLHQKTK) are extracellular.

It belongs to the ADIPOR family. As to expression, detected in most adult tissues. Higher expression found in white fat and liver than brown fat and skeletal muscle.

Its subcellular location is the cell membrane. Its function is as follows. Plasma membrane progesterone (P4) receptor coupled to G proteins. Seems to act through a G(i) mediated pathway. May be involved in oocyte maturation. Involved in neurosteroid inhibition of apoptosis. Also binds dehydroepiandrosterone (DHEA), pregnanolone, pregnenolone and allopregnanolone. The chain is Membrane progestin receptor alpha from Mus musculus (Mouse).